Consider the following 190-residue polypeptide: Carbonic anhydrase 2 (190 aa).

This sequence belongs to the beta-class carbonic anhydrase family. In terms of assembly, homohexamer.

It is found in the cytoplasm. The enzyme catalyses hydrogencarbonate + H(+) = CO2 + H2O. Functionally, reversible hydration of carbon dioxide. This is Carbonic anhydrase 2 from Flaveria linearis (Narrowleaf yellowtops).